The following is a 451-amino-acid chain: Probable asparagine--tRNA ligase, cytoplasmic (451 aa).

This sequence belongs to the class-II aminoacyl-tRNA synthetase family.

Its subcellular location is the cytoplasm. The catalysed reaction is tRNA(Asn) + L-asparagine + ATP = L-asparaginyl-tRNA(Asn) + AMP + diphosphate + H(+). This is Probable asparagine--tRNA ligase, cytoplasmic from Encephalitozoon cuniculi (strain GB-M1) (Microsporidian parasite).